The following is a 125-amino-acid chain: Snaclec coagulation factor IX/factor X-binding protein subunit B (125 aa).

The region spanning 1–122 (DCSSGWTAYG…SLFGHFVCKS (122 aa)) is the C-type lectin domain. Cystine bridges form between Cys-2/Cys-13, Cys-30/Cys-120, and Cys-97/Cys-112. Ser-41 and Glu-47 together coordinate Ca(2+).

It belongs to the snaclec family. Heterodimer of subunits A and B; disulfide-linked. In terms of tissue distribution, expressed by the venom gland.

Its subcellular location is the secreted. Functionally, anticoagulant protein which binds to coagulation factor IX (F9) and coagulation factor X (F10) in the presence of calcium. It may bind the gamma-carboxyglutamic acid-domain regions of factors with a 1 to 1 stoichiometry. The dissociation constant (K(d)) are 6.6 nM for factor IX (F9) and 125 nM for factor X (F10). Does not bind carbohydrates. This Echis carinatus (Saw-scaled viper) protein is Snaclec coagulation factor IX/factor X-binding protein subunit B.